The following is a 169-amino-acid chain: 4-hydroxylaminobenzoate lyase (169 aa).

Belongs to the PnbB family.

It carries out the reaction 4-hydroxylaminobenzoate + H2O + H(+) = 3,4-dihydroxybenzoate + NH4(+). Functionally, lyase involved in the degradation of nitroaromatic compounds. Catalyzes the conversion of 4-hydroxylaminobenzoate to 3,4-dihydroxybenzoate (protocatechuate). This is 4-hydroxylaminobenzoate lyase from Nocardioides sp. (strain LMS-CY).